A 287-amino-acid polypeptide reads, in one-letter code: Prepilin leader peptidase/N-methyltransferase (287 aa).

A helical transmembrane segment spans residues 12 to 32; that stretch reads FMYLVVGLFSLAVGSLLNVII. Cys-71, Cys-74, Cys-96, and Cys-99 together coordinate Zn(2+). 5 helical membrane passes run 127–147, 158–178, 182–202, 215–235, and 259–279; these read FTIQLLFALLAIWILISLVFI, LTLGLLWIGLIANTQNVFVSL, VLSCAGAYLALWLFINLFYLM, LFAAFGAWLGWMYLPIILLIS, and PFGPFLCISGLIAMFWGDSII.

It belongs to the peptidase A24 family. Requires Zn(2+) as cofactor.

The protein resides in the cell inner membrane. The catalysed reaction is Typically cleaves a -Gly-|-Phe- bond to release an N-terminal, basic peptide of 5-8 residues from type IV prepilin, and then N-methylates the new N-terminal amino group, the methyl donor being S-adenosyl-L-methionine.. Its function is as follows. Plays an essential role in type IV pili and type II pseudopili formation by proteolytically removing the leader sequence from substrate proteins and subsequently monomethylating the alpha-amino group of the newly exposed N-terminal phenylalanine. This Legionella pneumophila protein is Prepilin leader peptidase/N-methyltransferase (pilD).